The chain runs to 500 residues: Probable malate:quinone oxidoreductase (500 aa).

Belongs to the MQO family. Requires FAD as cofactor.

It carries out the reaction (S)-malate + a quinone = a quinol + oxaloacetate. It functions in the pathway carbohydrate metabolism; tricarboxylic acid cycle; oxaloacetate from (S)-malate (quinone route): step 1/1. This chain is Probable malate:quinone oxidoreductase, found in Bacillus mycoides (strain KBAB4) (Bacillus weihenstephanensis).